The chain runs to 66 residues: ATP synthase F(0) complex subunit 8 (66 aa).

Residues 8 to 24 (IWLLAVVIVLTTLMIFL) traverse the membrane as a helical segment. Lysine 54 is modified (N6-acetyllysine; alternate). Lysine 54 is modified (N6-succinyllysine; alternate). Lysine 57 carries the N6-acetyllysine modification.

The protein belongs to the ATPase protein 8 family. In terms of assembly, component of the ATP synthase complex composed at least of ATP5F1A/subunit alpha, ATP5F1B/subunit beta, ATP5MC1/subunit c (homooctomer), MT-ATP6/subunit a, MT-ATP8/subunit 8, ATP5ME/subunit e, ATP5MF/subunit f, ATP5MG/subunit g, ATP5MK/subunit k, ATP5MJ/subunit j, ATP5F1C/subunit gamma, ATP5F1D/subunit delta, ATP5F1E/subunit epsilon, ATP5PF/subunit F6, ATP5PB/subunit b, ATP5PD/subunit d, ATP5PO/subunit OSCP. ATP synthase complex consists of a soluble F(1) head domain (subunits alpha(3) and beta(3)) - the catalytic core - and a membrane F(0) domain - the membrane proton channel (subunits c, a, 8, e, f, g, k and j). These two domains are linked by a central stalk (subunits gamma, delta, and epsilon) rotating inside the F1 region and a stationary peripheral stalk (subunits F6, b, d, and OSCP). Interacts with PRICKLE3.

The protein localises to the mitochondrion membrane. Subunit 8, of the mitochondrial membrane ATP synthase complex (F(1)F(0) ATP synthase or Complex V) that produces ATP from ADP in the presence of a proton gradient across the membrane which is generated by electron transport complexes of the respiratory chain. ATP synthase complex consist of a soluble F(1) head domain - the catalytic core - and a membrane F(1) domain - the membrane proton channel. These two domains are linked by a central stalk rotating inside the F(1) region and a stationary peripheral stalk. During catalysis, ATP synthesis in the catalytic domain of F(1) is coupled via a rotary mechanism of the central stalk subunits to proton translocation. In vivo, can only synthesize ATP although its ATP hydrolase activity can be activated artificially in vitro. Part of the complex F(0) domain. This chain is ATP synthase F(0) complex subunit 8, found in Loxodonta africana (African elephant).